Here is a 1108-residue protein sequence, read N- to C-terminus: DNA-directed RNA polymerase subunit beta (1108 aa).

It belongs to the RNA polymerase beta chain family. As to quaternary structure, in plastids the minimal PEP RNA polymerase catalytic core is composed of four subunits: alpha, beta, beta', and beta''. When a (nuclear-encoded) sigma factor is associated with the core the holoenzyme is formed, which can initiate transcription.

It localises to the plastid. It is found in the chloroplast. It catalyses the reaction RNA(n) + a ribonucleoside 5'-triphosphate = RNA(n+1) + diphosphate. Its function is as follows. DNA-dependent RNA polymerase catalyzes the transcription of DNA into RNA using the four ribonucleoside triphosphates as substrates. This chain is DNA-directed RNA polymerase subunit beta, found in Gnetum parvifolium (Small-leaved jointfir).